An 88-amino-acid chain; its full sequence is Small ribosomal subunit protein uS15 (88 aa).

This sequence belongs to the universal ribosomal protein uS15 family. As to quaternary structure, part of the 30S ribosomal subunit. Forms a bridge to the 50S subunit in the 70S ribosome, contacting the 23S rRNA.

Its function is as follows. One of the primary rRNA binding proteins, it binds directly to 16S rRNA where it helps nucleate assembly of the platform of the 30S subunit by binding and bridging several RNA helices of the 16S rRNA. Functionally, forms an intersubunit bridge (bridge B4) with the 23S rRNA of the 50S subunit in the ribosome. This is Small ribosomal subunit protein uS15 from Psychrobacter arcticus (strain DSM 17307 / VKM B-2377 / 273-4).